A 431-amino-acid polypeptide reads, in one-letter code: Glutamate-1-semialdehyde 2,1-aminomutase (431 aa).

An N6-(pyridoxal phosphate)lysine modification is found at Lys-269.

This sequence belongs to the class-III pyridoxal-phosphate-dependent aminotransferase family. HemL subfamily. In terms of assembly, homodimer. The cofactor is pyridoxal 5'-phosphate.

The protein localises to the cytoplasm. The enzyme catalyses (S)-4-amino-5-oxopentanoate = 5-aminolevulinate. The protein operates within porphyrin-containing compound metabolism; protoporphyrin-IX biosynthesis; 5-aminolevulinate from L-glutamyl-tRNA(Glu): step 2/2. It functions in the pathway porphyrin-containing compound metabolism; chlorophyll biosynthesis. The polypeptide is Glutamate-1-semialdehyde 2,1-aminomutase (Prosthecochloris aestuarii (strain DSM 271 / SK 413)).